The primary structure comprises 116 residues: Iron-sulfur cluster insertion protein ErpA (116 aa).

Iron-sulfur cluster contacts are provided by Cys44, Cys108, and Cys110.

It belongs to the HesB/IscA family. Homodimer. It depends on iron-sulfur cluster as a cofactor.

In terms of biological role, required for insertion of 4Fe-4S clusters for at least IspG. The chain is Iron-sulfur cluster insertion protein ErpA from Shewanella baltica (strain OS223).